A 528-amino-acid polypeptide reads, in one-letter code: Acid-sensing ion channel 1 (528 aa).

Topologically, residues 1-49 (MELKAEEEEVGGVQPVSIQAFASSSTLHGLAHIFSYERLSLKRALWALC) are cytoplasmic. The chain crosses the membrane as a helical span at residues 50-66 (FLGSLAVLLCVCTERVQ). Residues 67–427 (YYFHYHHVTK…ETIEQKKAYE (361 aa)) lie on the Extracellular side of the membrane. 7 cysteine pairs are disulfide-bonded: C93-C194, C172-C179, C290-C367, C310-C363, C314-C361, C323-C345, and C325-C337. Residues N368 and N395 are each glycosylated (N-linked (GlcNAc...) asparagine). The chain crosses the membrane as a discontinuously helical span at residues 428–458 (IAGLLGDIGGQMGLFIGASILTVLELFDYAY). Residues 444-446 (GAS) carry the GAS motif; ion selectivity filter motif. The Cytoplasmic portion of the chain corresponds to 459 to 528 (EVIKHKLCRR…ARGTFEDFTC (70 aa)). The residue at position 479 (S479) is a Phosphoserine; by PKA. A Phosphoserine modification is found at S499.

It belongs to the amiloride-sensitive sodium channel (TC 1.A.6) family. ASIC1 subfamily. In terms of assembly, forms functional homotrimeric channels. Forms heterotrimers with other ASIC proteins, resulting in channels with distinct properties. Interacts with PICK1; regulates ASIC1 clustering in membranes. Interacts with STOM; alters heterotrimeric channels activity. Post-translationally, pH-gating could be regulated by serine proteases. In terms of processing, phosphorylation by PKA regulates interaction with PICK1 and subcellular localization. Phosphorylation by PKC may regulate the channel. In terms of tissue distribution, expressed in neurons throughout the central and peripheral nervous system.

The protein resides in the cell membrane. It localises to the postsynaptic cell membrane. It is found in the cell projection. The protein localises to the dendrite. The enzyme catalyses Na(+)(in) = Na(+)(out). It carries out the reaction K(+)(in) = K(+)(out). The catalysed reaction is Li(+)(in) = Li(+)(out). It catalyses the reaction Ca(2+)(in) = Ca(2+)(out). Its activity is regulated as follows. Potentiated by FMRFamide-related neuropeptides, which are induced during inflammation and modulate pain responses. Inhibited by the diuretic drug amiloride. Spider venom psalmotoxin-1 inhibits the channel by locking it in its desensitized conformation. The homotrimeric channel is inhibited by the spider venom pi-theraphotoxin-Hm3a. Homotrimeric and heterotrimeric (with ASIC2 isoform 1) channels are inhibited by the snake venom mambalgin-1, which prevents proton-induced transitions from the resting closed state to the active and/or desensitized states. Inhibited by Texas coral snake toxin MitTx1. Forms voltage-independent, pH-gated trimeric sodium channels that act as postsynaptic excitatory receptors in the nervous system, playing a crucial role in regulating synaptic plasticity, learning, and memory. Upon extracellular pH drop this channel elicits transient, fast activating, and completely desensitizing inward currents. Displays high selectivity for sodium ions but can also permit the permeation of other cations. Regulates more or less directly intracellular calcium concentration and CaMKII phosphorylation, and thereby the density of dendritic spines. Modulates neuronal activity in the circuits underlying innate fear. Its function is as follows. Has high selectivity for sodium ions, but can also be permeable to other cations including calcium, lithium and potassium. In terms of biological role, produces acid activated currents with a reduced amplitude and inactivates faster. Has high selectivity for sodium ions but also supports a calcium-mediated current which is sustained and maintained as long as acidic conditions are present. Also potentially permeable to lithium and potassium. Functionally, has no measurable proton-gated sodium channel activity in vitro. This chain is Acid-sensing ion channel 1, found in Homo sapiens (Human).